A 332-amino-acid polypeptide reads, in one-letter code: Ephrin-B2a (332 aa).

The first 24 residues, 1 to 24 (MGDSLWRYYFGVLVIACKVNLSRA), serve as a signal peptide directing secretion. 2 N-linked (GlcNAc...) asparagine glycosylation sites follow: asparagine 20 and asparagine 33. In terms of domain architecture, Ephrin RBD spans 25–161 (LILDSIYWNT…TKSMKIIMKV (137 aa)). At 25–225 (LILDSIYWNT…VIGSEVALFA (201 aa)) the chain is on the extracellular side. Disulfide bonds link cysteine 59–cysteine 98 and cysteine 86–cysteine 150. Asparagine 136 is a glycosylation site (N-linked (GlcNAc...) asparagine). Residues 162 to 212 (GQNPSDPISPKDYPTSYPPKHPDLGGKDSKSNEVLKPDASPHGEDKGDGNK) are disordered. Basic and acidic residues predominate over residues 181–210 (KHPDLGGKDSKSNEVLKPDASPHGEDKGDG). Asparagine 211 carries N-linked (GlcNAc...) asparagine glycosylation. The helical transmembrane segment at 226 to 246 (CIASASVIVIIIIIMLVFLLL) threads the bilayer. The Cytoplasmic segment spans residues 247–332 (KYRRRHRKHS…QSPANIYYKV (86 aa)). Positions 255–285 (HSPQHATTLSLSTLATPKRGGSGGNNNGSEP) are disordered. Residues 260–270 (ATTLSLSTLAT) are compositionally biased toward low complexity. Residues 330–332 (YKV) carry the PDZ-binding motif.

Belongs to the ephrin family. As to quaternary structure, binds to the receptor tyrosine kinase ephb4. Inducible phosphorylation of tyrosine residues in the cytoplasmic domain.

It localises to the cell membrane. Its function is as follows. Cell surface transmembrane ligand for Eph receptors, a family of receptor tyrosine kinases which are crucial for migration, repulsion and adhesion during neuronal, vascular and epithelial development. Binds promiscuously Eph receptors residing on adjacent cells, leading to contact-dependent bidirectional signaling into neighboring cells. The signaling pathway downstream of the receptor is referred to as forward signaling while the signaling pathway downstream of the ephrin ligand is referred to as reverse signaling. Together with ephb4 may play a central role in heart morphogenesis and angiogenesis through regulation of cell adhesion and cell migration. The protein is Ephrin-B2a (efnb2a) of Danio rerio (Zebrafish).